We begin with the raw amino-acid sequence, 159 residues long: MGVYTFENEYTSEIPPPRLFKAFVLDADNLIPKIAPQAIKHAEILEGDGGPGTIKKITFGEGSQYGYVKHKIDSVDEANYSYAYTLIEGDALTDTIEKVSYETKLVASGSGSIIKSISHYHTKGDVEIKEEHVKAGKEKAHGLFKLIESYLKGHPDAYN.

This sequence belongs to the BetVI family.

The sequence is that of Major allergen Mal d 1 from Malus domestica (Apple).